The chain runs to 258 residues: tRNA pseudouridine synthase A (258 aa).

The active-site Nucleophile is D52. Residue Y111 coordinates substrate.

This sequence belongs to the tRNA pseudouridine synthase TruA family. In terms of assembly, homodimer.

The catalysed reaction is uridine(38/39/40) in tRNA = pseudouridine(38/39/40) in tRNA. Its function is as follows. Formation of pseudouridine at positions 38, 39 and 40 in the anticodon stem and loop of transfer RNAs. The chain is tRNA pseudouridine synthase A from Azorhizobium caulinodans (strain ATCC 43989 / DSM 5975 / JCM 20966 / LMG 6465 / NBRC 14845 / NCIMB 13405 / ORS 571).